A 282-amino-acid chain; its full sequence is Nucleotide-binding protein Shew_3314 (282 aa).

Residue 8–15 (GRSGSGKS) coordinates ATP. 56-59 (DVRN) contacts GTP.

It belongs to the RapZ-like family.

Its function is as follows. Displays ATPase and GTPase activities. The protein is Nucleotide-binding protein Shew_3314 of Shewanella loihica (strain ATCC BAA-1088 / PV-4).